The chain runs to 250 residues: Probable transcriptional regulatory protein Nther_1800 (250 aa).

Belongs to the TACO1 family.

Its subcellular location is the cytoplasm. In Natranaerobius thermophilus (strain ATCC BAA-1301 / DSM 18059 / JW/NM-WN-LF), this protein is Probable transcriptional regulatory protein Nther_1800.